A 141-amino-acid polypeptide reads, in one-letter code: ATP synthase epsilon chain (141 aa).

The protein belongs to the ATPase epsilon chain family. As to quaternary structure, F-type ATPases have 2 components, CF(1) - the catalytic core - and CF(0) - the membrane proton channel. CF(1) has five subunits: alpha(3), beta(3), gamma(1), delta(1), epsilon(1). CF(0) has three main subunits: a, b and c.

It is found in the cell membrane. Its function is as follows. Produces ATP from ADP in the presence of a proton gradient across the membrane. This chain is ATP synthase epsilon chain (atpC), found in Mycoplasmopsis pulmonis (strain UAB CTIP) (Mycoplasma pulmonis).